The primary structure comprises 352 residues: N-acetyl-gamma-glutamyl-phosphate reductase (352 aa).

Residue C155 is part of the active site.

This sequence belongs to the NAGSA dehydrogenase family. Type 1 subfamily.

The protein resides in the cytoplasm. It catalyses the reaction N-acetyl-L-glutamate 5-semialdehyde + phosphate + NADP(+) = N-acetyl-L-glutamyl 5-phosphate + NADPH + H(+). Its pathway is amino-acid biosynthesis; L-arginine biosynthesis; N(2)-acetyl-L-ornithine from L-glutamate: step 3/4. Functionally, catalyzes the NADPH-dependent reduction of N-acetyl-5-glutamyl phosphate to yield N-acetyl-L-glutamate 5-semialdehyde. In Synechococcus elongatus (strain ATCC 33912 / PCC 7942 / FACHB-805) (Anacystis nidulans R2), this protein is N-acetyl-gamma-glutamyl-phosphate reductase.